The chain runs to 221 residues: GTP cyclohydrolase 1 (221 aa).

3 residues coordinate Zn(2+): Cys109, His112, and Cys180.

This sequence belongs to the GTP cyclohydrolase I family. In terms of assembly, toroid-shaped homodecamer, composed of two pentamers of five dimers.

It carries out the reaction GTP + H2O = 7,8-dihydroneopterin 3'-triphosphate + formate + H(+). Its pathway is cofactor biosynthesis; 7,8-dihydroneopterin triphosphate biosynthesis; 7,8-dihydroneopterin triphosphate from GTP: step 1/1. This chain is GTP cyclohydrolase 1, found in Blochmanniella pennsylvanica (strain BPEN).